The primary structure comprises 304 residues: DCN1-like protein 3 (304 aa).

Disordered stretches follow at residues 1 to 87 and 284 to 304; these read MGQC…EESS and EGEG…EEQT. Residue Gly-2 is the site of N-myristoyl glycine attachment. Residues 86 to 278 enclose the DCUN1 domain; the sequence is SSLQRLEELF…LFDTFVEWEM (193 aa).

As to quaternary structure, part of a complex containing DCUN1D3, CUL3 and RBX1. Interacts (via the DCUN1 domain) with the unneddylated cullins: interacts with CUL1, CUL2, CUL3, CUL4A, CUL4B and CUL5; these interactions promote the cullin neddylation and the identity of the cullin dictates the affinity of the interaction. Interacts preferentially with CUL3; this interaction triggers the relocalization of CUL3 to the cell membrane where CUL3 is neddylated. Interacts (via DCUN1 domain) with RBX1. May also interact with regulators or subunits of cullin-RING ligases such as RNF7, ELOB and DDB1; these interactions are bridged by cullins. Interacts (via DCUN1 domain) with CAND1; this interaction is bridged by cullins and strongly inhibits cullin neddylation. These CAND-cullin-DCNL complexes can only be neddylated in the presence of a substrate adapter. Interacts (via DCUN1 domain) with the N-terminally acetylated form of UBE2M and UBE2F.

The protein resides in the cell membrane. It localises to the cytoplasm. Its subcellular location is the nucleus. It is found in the perinuclear region. Functionally, contributes to the neddylation of all cullins by transferring NEDD8 from N-terminally acetylated NEDD8-conjugating E2s enzyme to different cullin C-terminal domain-RBX complexes and may play a role in the cell cycle progression by regulating the SCF ubiquitin E3 ligase complex, after UV damage. At the cell membrane, can promote and as well inhibit cullins neddylation. The polypeptide is DCN1-like protein 3 (Bos taurus (Bovine)).